We begin with the raw amino-acid sequence, 98 residues long: DNA-directed RNA polymerase subunit omega (98 aa).

Belongs to the RNA polymerase subunit omega family. As to quaternary structure, the RNAP catalytic core consists of 2 alpha, 1 beta, 1 beta' and 1 omega subunit. When a sigma factor is associated with the core the holoenzyme is formed, which can initiate transcription.

It catalyses the reaction RNA(n) + a ribonucleoside 5'-triphosphate = RNA(n+1) + diphosphate. Promotes RNA polymerase assembly. Latches the N- and C-terminal regions of the beta' subunit thereby facilitating its interaction with the beta and alpha subunits. In Xylella fastidiosa (strain M12), this protein is DNA-directed RNA polymerase subunit omega.